The sequence spans 822 residues: Structure-specific endonuclease subunit SLX4 (822 aa).

Disordered stretches follow at residues 1-39 (MSHL…PSAS), 73-117 (TPAV…PRPL), 277-362 (GTTN…GVSD), 390-418 (RVSS…TSVS), 456-507 (KSHE…SGQL), and 589-676 (KNSA…QASS). Residues 13–39 (SPSPSQIFGSSTTPVATNSTHSEPSAS) are compositionally biased toward polar residues. Low complexity predominate over residues 280-294 (NSSSSEGSSNKSSGK). The span at 310–320 (VTTITSLSTAQ) shows a compositional bias: polar residues. Over residues 342–354 (GKRSKSQTKKGGN) the composition is skewed to basic residues. The span at 460-470 (SSTLTLPSTST) shows a compositional bias: low complexity. Polar residues predominate over residues 471 to 484 (NASNQGFSSQNTIN). Over residues 490 to 506 (SQTTSTTTESTGVESGQ) the composition is skewed to low complexity. Residues 589 to 612 (KNSAPTSLPANNANPPDSHASGQK) show a composition bias toward polar residues. Positions 627 to 636 (TTKRASKAPQ) are enriched in basic residues. Low complexity predominate over residues 637–650 (KKQSTSSTSHSAKA).

The protein belongs to the SLX4 family. Forms a heterodimer with SLX1. Phosphorylated in response to DNA damage.

It localises to the nucleus. Its function is as follows. Regulatory subunit of the SLX1-SLX4 structure-specific endonuclease that resolves DNA secondary structures generated during DNA repair and recombination. Has endonuclease activity towards branched DNA substrates, introducing single-strand cuts in duplex DNA close to junctions with ss-DNA. This chain is Structure-specific endonuclease subunit SLX4, found in Coccidioides immitis (strain RS) (Valley fever fungus).